The sequence spans 318 residues: 4-hydroxy-3-methylbut-2-enyl diphosphate reductase (318 aa).

Cys-12 serves as a coordination point for [4Fe-4S] cluster. 2 residues coordinate (2E)-4-hydroxy-3-methylbut-2-enyl diphosphate: His-41 and His-74. Residues His-41 and His-74 each contribute to the dimethylallyl diphosphate site. Isopentenyl diphosphate-binding residues include His-41 and His-74. Residue Cys-96 participates in [4Fe-4S] cluster binding. His-124 lines the (2E)-4-hydroxy-3-methylbut-2-enyl diphosphate pocket. His-124 is a dimethylallyl diphosphate binding site. His-124 is a binding site for isopentenyl diphosphate. The active-site Proton donor is the Glu-126. Thr-167 contributes to the (2E)-4-hydroxy-3-methylbut-2-enyl diphosphate binding site. Residue Cys-197 coordinates [4Fe-4S] cluster. Positions 225, 226, 227, and 269 each coordinate (2E)-4-hydroxy-3-methylbut-2-enyl diphosphate. Dimethylallyl diphosphate-binding residues include Ser-225, Ser-226, Asn-227, and Ser-269. Positions 225, 226, 227, and 269 each coordinate isopentenyl diphosphate.

It belongs to the IspH family. The cofactor is [4Fe-4S] cluster.

It carries out the reaction isopentenyl diphosphate + 2 oxidized [2Fe-2S]-[ferredoxin] + H2O = (2E)-4-hydroxy-3-methylbut-2-enyl diphosphate + 2 reduced [2Fe-2S]-[ferredoxin] + 2 H(+). It catalyses the reaction dimethylallyl diphosphate + 2 oxidized [2Fe-2S]-[ferredoxin] + H2O = (2E)-4-hydroxy-3-methylbut-2-enyl diphosphate + 2 reduced [2Fe-2S]-[ferredoxin] + 2 H(+). It participates in isoprenoid biosynthesis; dimethylallyl diphosphate biosynthesis; dimethylallyl diphosphate from (2E)-4-hydroxy-3-methylbutenyl diphosphate: step 1/1. Its pathway is isoprenoid biosynthesis; isopentenyl diphosphate biosynthesis via DXP pathway; isopentenyl diphosphate from 1-deoxy-D-xylulose 5-phosphate: step 6/6. Catalyzes the conversion of 1-hydroxy-2-methyl-2-(E)-butenyl 4-diphosphate (HMBPP) into a mixture of isopentenyl diphosphate (IPP) and dimethylallyl diphosphate (DMAPP). Acts in the terminal step of the DOXP/MEP pathway for isoprenoid precursor biosynthesis. The protein is 4-hydroxy-3-methylbut-2-enyl diphosphate reductase of Francisella tularensis subsp. holarctica (strain LVS).